The primary structure comprises 408 residues: 2,3-bisphosphoglycerate-independent phosphoglycerate mutase 1 (408 aa).

Belongs to the BPG-independent phosphoglycerate mutase family. A-PGAM subfamily. In terms of assembly, monomer. Requires Mn(2+) as cofactor.

The enzyme catalyses (2R)-2-phosphoglycerate = (2R)-3-phosphoglycerate. It participates in carbohydrate degradation; glycolysis; pyruvate from D-glyceraldehyde 3-phosphate: step 3/5. In terms of biological role, catalyzes the interconversion of 2-phosphoglycerate and 3-phosphoglycerate. The polypeptide is 2,3-bisphosphoglycerate-independent phosphoglycerate mutase 1 (apgM1) (Archaeoglobus fulgidus (strain ATCC 49558 / DSM 4304 / JCM 9628 / NBRC 100126 / VC-16)).